The primary structure comprises 254 residues: 3-deoxy-manno-octulosonate cytidylyltransferase (254 aa).

The protein belongs to the KdsB family.

It is found in the cytoplasm. It catalyses the reaction 3-deoxy-alpha-D-manno-oct-2-ulosonate + CTP = CMP-3-deoxy-beta-D-manno-octulosonate + diphosphate. It functions in the pathway nucleotide-sugar biosynthesis; CMP-3-deoxy-D-manno-octulosonate biosynthesis; CMP-3-deoxy-D-manno-octulosonate from 3-deoxy-D-manno-octulosonate and CTP: step 1/1. The protein operates within bacterial outer membrane biogenesis; lipopolysaccharide biosynthesis. Functionally, activates KDO (a required 8-carbon sugar) for incorporation into bacterial lipopolysaccharide in Gram-negative bacteria. The chain is 3-deoxy-manno-octulosonate cytidylyltransferase from Nitrobacter winogradskyi (strain ATCC 25391 / DSM 10237 / CIP 104748 / NCIMB 11846 / Nb-255).